We begin with the raw amino-acid sequence, 150 residues long: Ribonuclease K6 (150 aa).

Residues 1–23 (MVLCFPLLLLLLVLWGQVCPLHA) form the signal peptide. The Proton acceptor role is filled by His-38. 4 disulfide bridges follow: Cys-46-Cys-104, Cys-60-Cys-114, Cys-78-Cys-129, and Cys-85-Cys-92. N-linked (GlcNAc...) asparagine glycosylation occurs at Asn-55. Substrate is bound by residues 61-65 (KPQNT) and Lys-86. The N-linked (GlcNAc...) asparagine glycan is linked to Asn-100. Arg-105 is a substrate binding site. His-145 serves as the catalytic Proton donor.

Belongs to the pancreatic ribonuclease family. Interacts (via N-terminus) with bacterial lipopolysaccharide (LPS).

It is found in the secreted. Its subcellular location is the lysosome. The protein localises to the cytoplasmic granule. Functionally, ribonuclease which shows a preference for the pyrimidines uridine and cytosine. Has potent antibacterial activity against a range of Gram-positive and Gram-negative bacteria, including P.aeruginosa, A.baumanii, M.luteus, S.aureus, E.faecalis, E.faecium, S.saprophyticus and E.coli. Causes loss of bacterial membrane integrity, and also promotes agglutination of Gram-negative bacteria. Probably contributes to urinary tract sterility. Bactericidal activity is independent of RNase activity. This chain is Ribonuclease K6 (RNASE6), found in Saimiri sciureus (Common squirrel monkey).